The sequence spans 320 residues: Putative thiosulfate sulfurtransferase 2 (320 aa).

2 Rhodanese domains span residues 18-125 (HAPK…PLSS) and 154-267 (AINV…HACP). The Cysteine persulfide intermediate role is filled by Cys-233. Arg-238 provides a ligand contact to substrate.

The catalysed reaction is thiosulfate + hydrogen cyanide = thiocyanate + sulfite + 2 H(+). Its function is as follows. May be a sulfotransferase involved in the formation of thiosulfate. The polypeptide is Putative thiosulfate sulfurtransferase 2 (cysA2) (Mycobacterium bovis (strain ATCC BAA-935 / AF2122/97)).